The chain runs to 207 residues: Small ribosomal subunit protein uS4 (207 aa).

The segment at 31–55 is disordered; the sequence is KCKLDSKPGQHGRTSGARTSDYGTQ. Over residues 42 to 53 the composition is skewed to polar residues; sequence GRTSGARTSDYG. Positions 97–160 constitute an S4 RNA-binding domain; it reads SRLDNVVYRM…KKQARIVEAL (64 aa).

The protein belongs to the universal ribosomal protein uS4 family. Part of the 30S ribosomal subunit. Contacts protein S5. The interaction surface between S4 and S5 is involved in control of translational fidelity.

Functionally, one of the primary rRNA binding proteins, it binds directly to 16S rRNA where it nucleates assembly of the body of the 30S subunit. In terms of biological role, with S5 and S12 plays an important role in translational accuracy. The sequence is that of Small ribosomal subunit protein uS4 from Burkholderia ambifaria (strain ATCC BAA-244 / DSM 16087 / CCUG 44356 / LMG 19182 / AMMD) (Burkholderia cepacia (strain AMMD)).